The primary structure comprises 549 residues: Glucose-6-phosphate isomerase (549 aa).

The active-site Proton donor is E355. Catalysis depends on residues H386 and K514.

The protein belongs to the GPI family.

The protein localises to the cytoplasm. The enzyme catalyses alpha-D-glucose 6-phosphate = beta-D-fructose 6-phosphate. It participates in carbohydrate biosynthesis; gluconeogenesis. It functions in the pathway carbohydrate degradation; glycolysis; D-glyceraldehyde 3-phosphate and glycerone phosphate from D-glucose: step 2/4. In terms of biological role, catalyzes the reversible isomerization of glucose-6-phosphate to fructose-6-phosphate. The sequence is that of Glucose-6-phosphate isomerase from Sodalis glossinidius (strain morsitans).